The sequence spans 118 residues: Nucleoid-associated protein TM_0687 (118 aa).

Belongs to the YbaB/EbfC family. In terms of assembly, homodimer.

Its subcellular location is the cytoplasm. It localises to the nucleoid. Binds to DNA and alters its conformation. May be involved in regulation of gene expression, nucleoid organization and DNA protection. The protein is Nucleoid-associated protein TM_0687 of Thermotoga maritima (strain ATCC 43589 / DSM 3109 / JCM 10099 / NBRC 100826 / MSB8).